The following is a 246-amino-acid chain: ATP synthase subunit a (246 aa).

Helical transmembrane passes span 34 to 54 (GQTM…TFIG), 92 to 112 (WVPL…LGQL), 130 to 150 (DINT…YAGL), 155 to 175 (FGYF…VLEF), and 196 to 216 (VVAV…MILF).

It belongs to the ATPase A chain family. F-type ATPases have 2 components, CF(1) - the catalytic core - and CF(0) - the membrane proton channel. CF(1) has five subunits: alpha(3), beta(3), gamma(1), delta(1), epsilon(1). CF(0) has four main subunits: a, b, b' and c.

The protein resides in the cell inner membrane. In terms of biological role, key component of the proton channel; it plays a direct role in the translocation of protons across the membrane. This Gloeobacter violaceus (strain ATCC 29082 / PCC 7421) protein is ATP synthase subunit a.